We begin with the raw amino-acid sequence, 397 residues long: Phosphoglycerate kinase (397 aa).

Residues Asp23–Asn25, Arg38, His61–Arg64, Arg119, and Arg152 contribute to the substrate site. ATP contacts are provided by residues Lys202, Glu324, and Gly354–Thr357.

It belongs to the phosphoglycerate kinase family. In terms of assembly, monomer.

The protein localises to the cytoplasm. It catalyses the reaction (2R)-3-phosphoglycerate + ATP = (2R)-3-phospho-glyceroyl phosphate + ADP. The protein operates within carbohydrate degradation; glycolysis; pyruvate from D-glyceraldehyde 3-phosphate: step 2/5. This chain is Phosphoglycerate kinase (pgk), found in Xanthobacter flavus.